The chain runs to 410 residues: Adenosylhomocysteinase (410 aa).

Substrate-binding residues include D117 and E142. Residue 143–145 participates in NAD(+) binding; the sequence is TTT. Substrate-binding residues include K172 and D176. Residues N177, 206–211, E229, 285–287, and N332 contribute to the NAD(+) site; these read GYGYCG and AGH.

Belongs to the adenosylhomocysteinase family. Requires NAD(+) as cofactor.

The protein localises to the cytoplasm. It carries out the reaction S-adenosyl-L-homocysteine + H2O = L-homocysteine + adenosine. The protein operates within amino-acid biosynthesis; L-homocysteine biosynthesis; L-homocysteine from S-adenosyl-L-homocysteine: step 1/1. May play a key role in the regulation of the intracellular concentration of adenosylhomocysteine. The chain is Adenosylhomocysteinase from Thermoplasma volcanium (strain ATCC 51530 / DSM 4299 / JCM 9571 / NBRC 15438 / GSS1).